The sequence spans 205 residues: Protein Rcp (205 aa).

It belongs to the NAD(P)-dependent epimerase/dehydratase family.

This chain is Protein Rcp (rcp), found in Vibrio cholerae serotype O1 (strain ATCC 39315 / El Tor Inaba N16961).